Reading from the N-terminus, the 105-residue chain is MAGIVSLVILAVALFSFMNFDPYVSQVLALKGDADRGRAIFQANCAVCHGIQADGYIGPSLWGVSQRRSQSHIIHQVVSGQTPPMPQFEPNPQEMADLLNYLKTL.

Positions 1–29 (MAGIVSLVILAVALFSFMNFDPYVSQVLA) are cleaved as a signal peptide. 4 residues coordinate heme c: Cys45, Cys48, His49, and Met85.

In terms of processing, binds 1 heme c group covalently per subunit.

The sequence is that of Cytochrome c-553-like (cytM) from Synechocystis sp. (strain ATCC 27184 / PCC 6803 / Kazusa).